Here is an 865-residue protein sequence, read N- to C-terminus: MITTKELRNKFINYFESKNHSHQPSSSLIPFGDDTLLFTNAGMVQFKDVFLGIEKKDFSRAVTVQKCLRAGGKHNDLDNVGYTARHHTFFEMLGNFSFGDYFKKEAISFAWEFLTKEIKLPVEKLWVTIYASDDEAFDVWHKHIGLAKERIIRIDSSDNFWSMGDTGPCGPCTEIFYDHGEDVAGGLPGTPEQDGDRYIEIWNIVFMQYNRHADGSTTDLPKPSVDTGMGLERISAVLQNVHSNYEIDLFQALIKKAQQVTHAKDINSPSLKVIADHIRACAFLIADGVLPANEGRGYVLRRIIRRAIRHGNKVGAKEIFFYKLVAELVSQMGEAYSQLIDKRELIEKTLIKEEKLFLKTIENGIKIFDAEIENLKDNTISGEVAFKLYDTYGFPFDLTADMAREKGLKVDEQAFLAQMQIQKQRSKEAGKFNVDYNSLINSQVKSEFRGYSTLIEDAKVLEIYQDDQLVASTSEQVSAVVVLDKTPFYAESGGQVGDKGILEGVGFEFVVEDVQKSGEAILHIGKLVKGRLNLNDELTARVSDKPRLATAANHSATHLLHKALKLVLGGHAEQKGSLVDEDRLRFDFTHDKAISRSEIEQIELLVNQQIRANYPVTTIEISQQKAKSLGAEALFGEKYGDIVRVISMGDFSIELCGGTHVAYTGDIGLFKVTSEGSIASGVRRIEAVTADKAIRHTFTNENKIIAIKDSLKANDINLIDKIKSMLEQIKNQEKQIAKLKKELLSGSSNDIKETNIGDIKVVVANVDGVDVKTLRNKIDDYKSKNTKVIAVLTTTNADKVQFVIGVSNALTTLIKAGDIAKELSSHIDGKGGGRADMAQGGGNNSANIDQALSQVEKFILNNIKE.

Zn(2+) is bound by residues H554, H558, C656, and H660.

It belongs to the class-II aminoacyl-tRNA synthetase family. The cofactor is Zn(2+).

The protein localises to the cytoplasm. It catalyses the reaction tRNA(Ala) + L-alanine + ATP = L-alanyl-tRNA(Ala) + AMP + diphosphate. Functionally, catalyzes the attachment of alanine to tRNA(Ala) in a two-step reaction: alanine is first activated by ATP to form Ala-AMP and then transferred to the acceptor end of tRNA(Ala). Also edits incorrectly charged Ser-tRNA(Ala) and Gly-tRNA(Ala) via its editing domain. The protein is Alanine--tRNA ligase of Francisella tularensis subsp. mediasiatica (strain FSC147).